The following is a 347-amino-acid chain: Quinolinate synthase (347 aa).

Positions 47 and 68 each coordinate iminosuccinate. [4Fe-4S] cluster is bound at residue C113. Residues 139–141 (YAN) and S156 contribute to the iminosuccinate site. Position 200 (C200) interacts with [4Fe-4S] cluster. Residues 226–228 (HPE) and T243 each bind iminosuccinate. C297 lines the [4Fe-4S] cluster pocket.

Belongs to the quinolinate synthase family. Type 1 subfamily. It depends on [4Fe-4S] cluster as a cofactor.

The protein resides in the cytoplasm. The catalysed reaction is iminosuccinate + dihydroxyacetone phosphate = quinolinate + phosphate + 2 H2O + H(+). Its pathway is cofactor biosynthesis; NAD(+) biosynthesis; quinolinate from iminoaspartate: step 1/1. Catalyzes the condensation of iminoaspartate with dihydroxyacetone phosphate to form quinolinate. The sequence is that of Quinolinate synthase from Shigella boydii serotype 4 (strain Sb227).